A 227-amino-acid chain; its full sequence is Cytochrome c oxidase subunit 2 (227 aa).

Residues methionine 1–serine 14 are Mitochondrial intermembrane-facing. A helical membrane pass occupies residues proline 15–threonine 45. Topologically, residues leucine 46–glutamine 59 are mitochondrial matrix. Residues glutamate 60–threonine 87 form a helical membrane-spanning segment. Residues aspartate 88–leucine 227 lie on the Mitochondrial intermembrane side of the membrane. 6 residues coordinate Cu cation: histidine 161, cysteine 196, glutamate 198, cysteine 200, histidine 204, and methionine 207. Residue glutamate 198 participates in Mg(2+) binding.

This sequence belongs to the cytochrome c oxidase subunit 2 family. In terms of assembly, component of the cytochrome c oxidase (complex IV, CIV), a multisubunit enzyme composed of 14 subunits. The complex is composed of a catalytic core of 3 subunits MT-CO1, MT-CO2 and MT-CO3, encoded in the mitochondrial DNA, and 11 supernumerary subunits COX4I, COX5A, COX5B, COX6A, COX6B, COX6C, COX7A, COX7B, COX7C, COX8 and NDUFA4, which are encoded in the nuclear genome. The complex exists as a monomer or a dimer and forms supercomplexes (SCs) in the inner mitochondrial membrane with NADH-ubiquinone oxidoreductase (complex I, CI) and ubiquinol-cytochrome c oxidoreductase (cytochrome b-c1 complex, complex III, CIII), resulting in different assemblies (supercomplex SCI(1)III(2)IV(1) and megacomplex MCI(2)III(2)IV(2)). Found in a complex with TMEM177, COA6, COX18, COX20, SCO1 and SCO2. Interacts with TMEM177 in a COX20-dependent manner. Interacts with COX20. Interacts with COX16. Requires Cu cation as cofactor.

It localises to the mitochondrion inner membrane. The enzyme catalyses 4 Fe(II)-[cytochrome c] + O2 + 8 H(+)(in) = 4 Fe(III)-[cytochrome c] + 2 H2O + 4 H(+)(out). In terms of biological role, component of the cytochrome c oxidase, the last enzyme in the mitochondrial electron transport chain which drives oxidative phosphorylation. The respiratory chain contains 3 multisubunit complexes succinate dehydrogenase (complex II, CII), ubiquinol-cytochrome c oxidoreductase (cytochrome b-c1 complex, complex III, CIII) and cytochrome c oxidase (complex IV, CIV), that cooperate to transfer electrons derived from NADH and succinate to molecular oxygen, creating an electrochemical gradient over the inner membrane that drives transmembrane transport and the ATP synthase. Cytochrome c oxidase is the component of the respiratory chain that catalyzes the reduction of oxygen to water. Electrons originating from reduced cytochrome c in the intermembrane space (IMS) are transferred via the dinuclear copper A center (CU(A)) of subunit 2 and heme A of subunit 1 to the active site in subunit 1, a binuclear center (BNC) formed by heme A3 and copper B (CU(B)). The BNC reduces molecular oxygen to 2 water molecules using 4 electrons from cytochrome c in the IMS and 4 protons from the mitochondrial matrix. This Chlorocebus aethiops (Green monkey) protein is Cytochrome c oxidase subunit 2 (MT-CO2).